The sequence spans 163 residues: MADARRAPLKDQTDVSGARVLIVEARFYDDIQDALLEGAVAELKAAGATHDVLTVPGALEIPAAVAIAIDSAEAAGKPYDAAIALGCVVRGETIHFEIVSMESARALMDLSVARKFPLGNGIITVNTDEQAWARAKPGDLNKGGDAARAALAMLRIKRRLAKA.

Residues Phe27, 58 to 60, and 87 to 89 contribute to the 5-amino-6-(D-ribitylamino)uracil site; these read ALE and CVV. 92 to 93 contacts (2S)-2-hydroxy-3-oxobutyl phosphate; that stretch reads ET. Residue His95 is the Proton donor of the active site. Asn120 contacts 5-amino-6-(D-ribitylamino)uracil. Residue Arg134 participates in (2S)-2-hydroxy-3-oxobutyl phosphate binding.

It belongs to the DMRL synthase family.

The catalysed reaction is (2S)-2-hydroxy-3-oxobutyl phosphate + 5-amino-6-(D-ribitylamino)uracil = 6,7-dimethyl-8-(1-D-ribityl)lumazine + phosphate + 2 H2O + H(+). The protein operates within cofactor biosynthesis; riboflavin biosynthesis; riboflavin from 2-hydroxy-3-oxobutyl phosphate and 5-amino-6-(D-ribitylamino)uracil: step 1/2. Its function is as follows. Catalyzes the formation of 6,7-dimethyl-8-ribityllumazine by condensation of 5-amino-6-(D-ribitylamino)uracil with 3,4-dihydroxy-2-butanone 4-phosphate. This is the penultimate step in the biosynthesis of riboflavin. In Rhodopseudomonas palustris (strain ATCC BAA-98 / CGA009), this protein is 6,7-dimethyl-8-ribityllumazine synthase 1.